The chain runs to 111 residues: Ig kappa chain V-III region PC 2413 (111 aa).

The tract at residues 1 to 23 is framework-1; that stretch reads DIVLTQSPASLAVSLGQRATISC. A disulfide bond links C23 and C92. The segment at 24-38 is complementarity-determining-1; it reads RASESVVNYGVSLMH. The tract at residues 39–53 is framework-2; sequence WFQQKPGQPPKLLIY. The complementarity-determining-2 stretch occupies residues 54–60; the sequence is GASNRGS. A framework-3 region spans residues 61–92; that stretch reads GVPARFSGSGSGTDFSLIIHPMEEDDSAMYFC. A complementarity-determining-3 region spans residues 93-101; it reads HQTKEVPWT. The framework-4 stretch occupies residues 102 to 111; the sequence is FGGGTDLEIE.

The polypeptide is Ig kappa chain V-III region PC 2413 (Mus musculus (Mouse)).